Here is a 507-residue protein sequence, read N- to C-terminus: Subtilisin-like protease 1 (507 aa).

The N-terminal stretch at 1-19 (MGVFRFISISLAAVSAANA) is a signal peptide. Positions 20–116 (AQILSMPHAQ…VEPDTIISVN (97 aa)) are excised as a propeptide. The region spanning 34-113 (SYIVMMKDDT…VMFVEPDTII (80 aa)) is the Inhibitor I9 domain. A Peptidase S8 domain is found at 126-400 (SWGLARISNS…NVLISNGGAK (275 aa)). Active-site charge relay system residues include Asp158 and His190. The tract at residues 175–198 (GSNQVNDGDDRDGSGHGTHTSGTM) is disordered. An N-linked (GlcNAc...) asparagine glycan is attached at Asn251. The segment covering 282-294 (NENQDARSSSPAS) has biased composition (polar residues). The tract at residues 282 to 312 (NENQDARSSSPASEPSVCTVGSSAEDDSRSS) is disordered. Ser345 functions as the Charge relay system in the catalytic mechanism. Residues 378–394 (SSSITDVGPGTPTNVLI) show a composition bias toward polar residues. The segment at 378–486 (SSSITDVGPG…YPGGDNFDFD (109 aa)) is disordered. Composition is skewed to pro residues over residues 405-428 (KPAP…PSQP) and 438-449 (EPFPGEPFPGEP). The segment covering 450-461 (FPGESSPGESAP) has biased composition (low complexity). Residues 462–476 (APAPMPPSPQHPHTP) show a composition bias toward pro residues.

This sequence belongs to the peptidase S8 family.

It localises to the secreted. Secreted subtilisin-like serine protease with keratinolytic activity that contributes to pathogenicity. The protein is Subtilisin-like protease 1 (SUB1) of Trichophyton tonsurans (Scalp ringworm fungus).